Consider the following 269-residue polypeptide: Aquaporin-1 (269 aa).

The Cytoplasmic portion of the chain corresponds to 1 to 11; it reads MASEIKKKLFW. Residues 12 to 29 form a helical membrane-spanning segment; sequence RAVVAEFLAMTLFVFISI. The Extracellular portion of the chain corresponds to 30 to 46; that stretch reads GSALGFNYPLERNQTLV. N-linked (GlcNAc...) asparagine glycosylation is present at N42. A helical membrane pass occupies residues 47–65; the sequence is QDNVKVSLAFGLSIATLAQ. The Cytoplasmic portion of the chain corresponds to 66–68; it reads SVG. An intramembrane segment occupies 69–82; it reads HISGAHLNPAVTLG. Residues 76-78 carry the NPA 1 motif; it reads NPA. The Cytoplasmic segment spans residues 83–90; it reads LLLSCQIS. A helical membrane pass occupies residues 91–109; it reads ILRAVMYIIAQCVGAIVAS. Topologically, residues 110 to 133 are extracellular; the sequence is AILSGITSSLLENSLGRNDLARGV. A helical membrane pass occupies residues 134 to 153; sequence NSGQGLGIEIIGTLQLVLCV. The Cytoplasmic portion of the chain corresponds to 154 to 163; sequence LATTDRRRRD. Residues 164–181 traverse the membrane as a helical segment; sequence LGGSAPLAIGLSVALGHL. Residues 182–186 lie on the Extracellular side of the membrane; sequence LAIDY. The stretch at 187–199 is an intramembrane region; that stretch reads TGCGINPARSFGS. An NPA 2 motif is present at residues 192-194; it reads NPA. Residues 200–206 are Extracellular-facing; sequence AVLTRNF. N205 is a glycosylation site (N-linked (GlcNAc...) asparagine). A helical membrane pass occupies residues 207 to 224; sequence SNHWIFWVGPFIGSALAV. Over 225-269 the chain is Cytoplasmic; that stretch reads LIYDFILAPRSSDFTDRMKVWTSGQVEEYDLDADDINSRVEMKPK. S247 bears the Phosphoserine mark. At Y253 the chain carries Phosphotyrosine. At S262 the chain carries Phosphoserine.

The protein belongs to the MIP/aquaporin (TC 1.A.8) family. As to quaternary structure, homotetramer; each monomer provides an independent water pore. Component of the ankyrin-1 complex in the erythrocyte, composed of ANK1, RHCE, RHAG, SLC4A1, EPB42, GYPA, GYPB and AQP1. Interacts with EPHB2; involved in endolymph production in the inner ear. Identified in a complex with STOM. Interacts (via the N-terminal) with ANK1 (via ANK 1-5 repeats). Interacts (via the C-terminal) with EPB42. As to expression, erythrocytes and renal tubules.

The protein localises to the cell membrane. The catalysed reaction is H2O(in) = H2O(out). It catalyses the reaction nitric oxide(out) = nitric oxide(in). The enzyme catalyses CO2(out) = CO2(in). It carries out the reaction glycerol(in) = glycerol(out). The catalysed reaction is H2O2(out) = H2O2(in). It catalyses the reaction K(+)(in) = K(+)(out). The enzyme catalyses Na(+)(in) = Na(+)(out). In terms of biological role, forms a water channel that facilitates the transport of water across cell membranes, playing a crucial role in water homeostasis in various tissues. Could also be permeable to small solutes including hydrogen peroxide, glycerol and gases such as amonnia (NH3), nitric oxide (NO) and carbon dioxide (CO2). Recruited to the ankyrin-1 complex, a multiprotein complex of the erythrocyte membrane, it could be part of a CO2 metabolon, linking facilitated diffusion of CO2 across the membrane, anion exchange of Cl(-)/HCO3(-) and interconversion of dissolved CO2 and carbonic acid in the cytosol. In vitro, it shows non-selective gated cation channel activity and may be permeable to cations like K(+) and Na(+) in vivo. The sequence is that of Aquaporin-1 from Rattus norvegicus (Rat).